Reading from the N-terminus, the 535-residue chain is GMP synthase [glutamine-hydrolyzing] (535 aa).

Residues 4–210 (KILILDFGSQ…VHEICHCKPD (207 aa)) form the Glutamine amidotransferase type-1 domain. The Nucleophile role is filled by Cys-85. Active-site residues include His-184 and Glu-186. Positions 211-403 (WVMGDYIAEA…LGLPREMVYR (193 aa)) constitute a GMPS ATP-PPase domain. 238–244 (SGGVDSS) contributes to the ATP binding site.

In terms of assembly, homodimer.

The catalysed reaction is XMP + L-glutamine + ATP + H2O = GMP + L-glutamate + AMP + diphosphate + 2 H(+). The protein operates within purine metabolism; GMP biosynthesis; GMP from XMP (L-Gln route): step 1/1. Catalyzes the synthesis of GMP from XMP. The protein is GMP synthase [glutamine-hydrolyzing] of Polynucleobacter asymbioticus (strain DSM 18221 / CIP 109841 / QLW-P1DMWA-1) (Polynucleobacter necessarius subsp. asymbioticus).